The following is a 796-amino-acid chain: Peroxisome proliferator-activated receptor gamma coactivator 1-alpha (796 aa).

Lys-77 bears the N6-acetyllysine mark. Residues 98–138 (PVDEDGLPSFDALTDGDVTTENEASPSSMPDGTPPPQEAEE) are disordered. Polar residues predominate over residues 114 to 127 (DVTTENEASPSSMP). An LXXLL motif motif is present at residues 142–146 (LKKLL). Lys-144 carries the post-translational modification N6-acetyllysine. Phosphothreonine; by AMPK is present on Thr-176. Lys-182 carries the N6-acetyllysine modification. Residues 211–274 (YLTTNDDPPH…PNDPKGSPFE (64 aa)) are disordered. The span at 217 to 235 (DPPHTKPTETRNSSRDKCT) shows a compositional bias: basic and acidic residues. Polar residues predominate over residues 242–258 (TQSQSQHLQAKPTSLSL). Lys-252, Lys-269, Lys-276, and Lys-319 each carry N6-acetyllysine. The interval 288–349 (GTAGLTPPTT…NNSTKKGPEQ (62 aa)) is disordered. Residues 291–337 (GLTPPTTPPHKANQDNPFRASPKLKPPCKTVVPPPSKKTRYSESSGT) form an interaction with PPARG region. Over residues 332–344 (SESSGTHGNNSTK) the composition is skewed to polar residues. An N6-acetyllysine mark is found at Lys-345, Lys-411, and Lys-449. The mediates interaction with RNF34 stretch occupies residues 348–796 (EQSELYAQLS…LKEAQRSLRR (449 aa)). Residues 463–487 (HFGHPSQAVFDDEADKTSELRDSDF) form a disordered region. Basic and acidic residues predominate over residues 477-486 (DKTSELRDSD). Phosphoserine; by AMPK is present on Ser-537. 2 disordered regions span residues 541–637 (FNSP…SYEE) and 648–667 (YRREYEKRESERAKQRERQR). Low complexity predominate over residues 568–603 (RSFSQHRSCSRSPYSRSRSRSPGSRSSSRSCYYSES). Positions 620–629 (SRSRSPYSRR) are enriched in basic residues. The RRM domain maps to 675–751 (RVIYVGKIRP…TDFELYFCGR (77 aa)). Residues Lys-756 and Lys-777 each carry the N6-acetyllysine modification.

As to quaternary structure, homooligomer. Interacts with MYBBP1A; inhibits MYBBP1A transcriptional activation. Interacts with PRDM16, LPIN1 and PML. Interacts (via LXXLL motif) with RORA and RORC (via AF-2 motif); activates RORA and RORC transcriptional activation. Interacts with LRPPRC. Interacts with FOXO1. Interacts with NR5A2. In terms of processing, phosphorylation by AMPK in skeletal muscle increases activation of its own promoter. Phosphorylated by CLK2. Post-translationally, heavily acetylated by KAT2A/GCN5 under conditions of high nutrients, leading to inactivation of PPARGC1A. Deacetylated by SIRT1 in low nutrients/high NAD conditions, leading to its activation. Ubiquitinated. Ubiquitination by RNF34 induces proteasomal degradation.

The protein localises to the nucleus. It is found in the PML body. Its function is as follows. Transcriptional coactivator for steroid receptors and nuclear receptors. Greatly increases the transcriptional activity of PPARG and thyroid hormone receptor on the uncoupling protein promoter. Can regulate key mitochondrial genes that contribute to the program of adaptive thermogenesis. Plays an essential role in metabolic reprogramming in response to dietary availability through coordination of the expression of a wide array of genes involved in glucose and fatty acid metabolism. Acts as a key regulator of gluconeogenesis: stimulates hepatic gluconeogenesis by increasing the expression of gluconeogenic enzymes, and acting together with FOXO1 to promote the fasting gluconeogenic program. Induces the expression of PERM1 in the skeletal muscle in an ESRRA-dependent manner. Also involved in the integration of the circadian rhythms and energy metabolism. Required for oscillatory expression of clock genes, such as BMAL1 and NR1D1, through the coactivation of RORA and RORC, and metabolic genes, such as PDK4 and PEPCK. The chain is Peroxisome proliferator-activated receptor gamma coactivator 1-alpha (PPARGC1A) from Sus scrofa (Pig).